The chain runs to 133 residues: Probable mitochondrial pyruvate carrier 2 (133 aa).

The next 3 membrane-spanning stretches (helical) occupy residues 40-57, 73-91, and 100-116; these read VFFWAPTIKWTLIGAGLA, ALFATGAIWTRYCLVITPI, and FFVMCTGLAQLCRIAHY.

Belongs to the mitochondrial pyruvate carrier (MPC) (TC 2.A.105) family.

It localises to the mitochondrion inner membrane. Functionally, may mediate the uptake of pyruvate into mitochondria. This Caenorhabditis elegans protein is Probable mitochondrial pyruvate carrier 2.